The primary structure comprises 135 residues: Small ribosomal subunit protein uS11 (135 aa).

The protein belongs to the universal ribosomal protein uS11 family. In terms of assembly, part of the 30S ribosomal subunit. Interacts with proteins S7 and S18. Binds to IF-3.

In terms of biological role, located on the platform of the 30S subunit, it bridges several disparate RNA helices of the 16S rRNA. Forms part of the Shine-Dalgarno cleft in the 70S ribosome. This chain is Small ribosomal subunit protein uS11, found in Polynucleobacter asymbioticus (strain DSM 18221 / CIP 109841 / QLW-P1DMWA-1) (Polynucleobacter necessarius subsp. asymbioticus).